The following is a 322-amino-acid chain: Phosphatidylserine decarboxylase proenzyme (322 aa).

Active-site charge relay system; for autoendoproteolytic cleavage activity residues include D90, H147, and S254. The active-site Schiff-base intermediate with substrate; via pyruvic acid; for decarboxylase activity is the S254. A Pyruvic acid (Ser); by autocatalysis modification is found at S254. The segment at P293–V322 is disordered. Residues E308–V322 show a composition bias toward basic and acidic residues.

Belongs to the phosphatidylserine decarboxylase family. PSD-B subfamily. Prokaryotic type I sub-subfamily. Heterodimer of a large membrane-associated beta subunit and a small pyruvoyl-containing alpha subunit. Requires pyruvate as cofactor. Is synthesized initially as an inactive proenzyme. Formation of the active enzyme involves a self-maturation process in which the active site pyruvoyl group is generated from an internal serine residue via an autocatalytic post-translational modification. Two non-identical subunits are generated from the proenzyme in this reaction, and the pyruvate is formed at the N-terminus of the alpha chain, which is derived from the carboxyl end of the proenzyme. The autoendoproteolytic cleavage occurs by a canonical serine protease mechanism, in which the side chain hydroxyl group of the serine supplies its oxygen atom to form the C-terminus of the beta chain, while the remainder of the serine residue undergoes an oxidative deamination to produce ammonia and the pyruvoyl prosthetic group on the alpha chain. During this reaction, the Ser that is part of the protease active site of the proenzyme becomes the pyruvoyl prosthetic group, which constitutes an essential element of the active site of the mature decarboxylase.

It is found in the cell membrane. The catalysed reaction is a 1,2-diacyl-sn-glycero-3-phospho-L-serine + H(+) = a 1,2-diacyl-sn-glycero-3-phosphoethanolamine + CO2. Its pathway is phospholipid metabolism; phosphatidylethanolamine biosynthesis; phosphatidylethanolamine from CDP-diacylglycerol: step 2/2. Its function is as follows. Catalyzes the formation of phosphatidylethanolamine (PtdEtn) from phosphatidylserine (PtdSer). The sequence is that of Phosphatidylserine decarboxylase proenzyme from Escherichia coli O127:H6 (strain E2348/69 / EPEC).